The chain runs to 422 residues: L-2-hydroxyglutarate dehydrogenase (422 aa).

The protein belongs to the L2HGDH family. It depends on FAD as a cofactor.

The protein resides in the cell inner membrane. It carries out the reaction (S)-2-hydroxyglutarate + a quinone = a quinol + 2-oxoglutarate. The protein operates within amino-acid degradation. In terms of biological role, catalyzes the dehydrogenation of L-2-hydroxyglutarate (L2HG) to alpha-ketoglutarate and couples to the respiratory chain by feeding electrons from the reaction into the membrane quinone pool. Functions in a L-lysine degradation pathway that proceeds via cadaverine, glutarate and L-2-hydroxyglutarate. Also displays some oxidase activity in vitro on L-2-hydroxyglutarate with O2 as the electron acceptor, but this activity is most likely not physiological. This chain is L-2-hydroxyglutarate dehydrogenase, found in Escherichia coli O17:K52:H18 (strain UMN026 / ExPEC).